A 1060-amino-acid polypeptide reads, in one-letter code: Carbamoyl phosphate synthase large chain (1060 aa).

The interval 1–401 is carboxyphosphate synthetic domain; the sequence is MPKRQDIHKI…SLLKAVRSLE (401 aa). 12 residues coordinate ATP: Arg-129, Arg-169, Gly-175, Gly-176, Arg-208, Ile-210, Glu-215, Gly-241, Val-242, His-243, Gln-284, and Glu-298. An ATP-grasp 1 domain is found at 133–327; the sequence is KNLMQKLHEP…IAKMAAKIAV (195 aa). Mg(2+)-binding residues include Gln-284, Glu-298, and Asn-300. 3 residues coordinate Mn(2+): Gln-284, Glu-298, and Asn-300. The segment at 402 to 546 is oligomerization domain; that stretch reads VGLIHPERPA…YSTYESSTES (145 aa). A carbamoyl phosphate synthetic domain region spans residues 547–929; it reads VKSDKPSVLV…ALYKAFEAAG (383 aa). Residues 671-861 enclose the ATP-grasp 2 domain; that stretch reads DQVIKSLKLP…LAQVATLAIL (191 aa). Residues Arg-707, His-746, Leu-748, Glu-752, Gly-777, Ile-778, His-779, Ser-780, Gln-820, and Glu-832 each contribute to the ATP site. Gln-820, Glu-832, and Asn-834 together coordinate Mg(2+). The Mn(2+) site is built by Gln-820, Glu-832, and Asn-834. An MGS-like domain is found at 930–1060; the sequence is MHLPQFGRAL…QAFSISPIKS (131 aa). The allosteric domain stretch occupies residues 930–1060; that stretch reads MHLPQFGRAL…QAFSISPIKS (131 aa).

It belongs to the CarB family. Composed of two chains; the small (or glutamine) chain promotes the hydrolysis of glutamine to ammonia, which is used by the large (or ammonia) chain to synthesize carbamoyl phosphate. Tetramer of heterodimers (alpha,beta)4. Mg(2+) serves as cofactor. Requires Mn(2+) as cofactor.

The catalysed reaction is hydrogencarbonate + L-glutamine + 2 ATP + H2O = carbamoyl phosphate + L-glutamate + 2 ADP + phosphate + 2 H(+). It catalyses the reaction hydrogencarbonate + NH4(+) + 2 ATP = carbamoyl phosphate + 2 ADP + phosphate + 2 H(+). The protein operates within amino-acid biosynthesis; L-arginine biosynthesis; carbamoyl phosphate from bicarbonate: step 1/1. Its pathway is pyrimidine metabolism; UMP biosynthesis via de novo pathway; (S)-dihydroorotate from bicarbonate: step 1/3. In terms of biological role, large subunit of the glutamine-dependent carbamoyl phosphate synthetase (CPSase). CPSase catalyzes the formation of carbamoyl phosphate from the ammonia moiety of glutamine, carbonate, and phosphate donated by ATP, constituting the first step of 2 biosynthetic pathways, one leading to arginine and/or urea and the other to pyrimidine nucleotides. The large subunit (synthetase) binds the substrates ammonia (free or transferred from glutamine from the small subunit), hydrogencarbonate and ATP and carries out an ATP-coupled ligase reaction, activating hydrogencarbonate by forming carboxy phosphate which reacts with ammonia to form carbamoyl phosphate. The sequence is that of Carbamoyl phosphate synthase large chain from Lacticaseibacillus paracasei (strain ATCC 334 / BCRC 17002 / CCUG 31169 / CIP 107868 / KCTC 3260 / NRRL B-441) (Lactobacillus paracasei).